The following is a 258-amino-acid chain: Type II restriction enzyme HincII (258 aa).

It catalyses the reaction Endonucleolytic cleavage of DNA to give specific double-stranded fragments with terminal 5'-phosphates.. Its function is as follows. A P subtype restriction enzyme that recognizes the double-stranded sequence 5'-GTYRAC-3' and cleaves after Y-3. This Haemophilus influenzae protein is Type II restriction enzyme HincII (hincIIR).